Here is a 478-residue protein sequence, read N- to C-terminus: POU domain, class 2, transcription factor 2 (478 aa).

Disordered regions lie at residues 1–82 (MVHS…PPQA), 167–199 (QAVT…EASD), 275–298 (SSLP…GRRR), 357–391 (PCSA…PLSQ), and 409–478 (TLHP…PYQP). A compositionally biased stretch (basic and acidic residues) spans 12–37 (RMSKPLEAEKQGLDSPSEHTDTERNG). Residues 38–60 (PDTNHQNPQNKTSPFSVSPTGPS) are compositionally biased toward polar residues. Residues 195-269 (EEASDLEELE…LLEKWLNDAE (75 aa)) enclose the POU-specific domain. Residues 275-285 (SSLPSPNQLSR) show a composition bias toward polar residues. The homeobox DNA-binding region spans 297–356 (RRKKRTSIETNVRFALEKSFLANQKPTSEEILLIAEQLHMEKEVIRVWFCNRRQKEKRIN). Residues 389–410 (LSQASSSLSTTVTTLSSAVGTL) form a leucine-zipper region. Residues 416-425 (AGGGAAGGGA) are compositionally biased toward gly residues.

It belongs to the POU transcription factor family. Class-2 subfamily. In terms of assembly, interacts with NR3C1, AR and PGR. Interacts with POU2AF1; the interaction increases POU2F2 transactivation activity. Predominantly expressed in B-cells.

It localises to the nucleus. Its activity is regulated as follows. Transactivation activity is enhanced by transcriptional coactivator POU2AF1. Functionally, transcription factor that specifically binds to the octamer motif (5'-ATTTGCAT-3'). Regulates IL6 expression in B cells with POU2AF1. Regulates transcription in a number of tissues in addition to activating immunoglobulin gene expression. Modulates transcription transactivation by NR3C1, AR and PGR. This Sus scrofa (Pig) protein is POU domain, class 2, transcription factor 2 (POU2F2).